Consider the following 242-residue polypeptide: 1-(5-phosphoribosyl)-5-[(5-phosphoribosylamino)methylideneamino] imidazole-4-carboxamide isomerase (242 aa).

The Proton acceptor role is filled by D8. The active-site Proton donor is the D129.

Belongs to the HisA/HisF family.

Its subcellular location is the cytoplasm. The catalysed reaction is 1-(5-phospho-beta-D-ribosyl)-5-[(5-phospho-beta-D-ribosylamino)methylideneamino]imidazole-4-carboxamide = 5-[(5-phospho-1-deoxy-D-ribulos-1-ylimino)methylamino]-1-(5-phospho-beta-D-ribosyl)imidazole-4-carboxamide. Its pathway is amino-acid biosynthesis; L-histidine biosynthesis; L-histidine from 5-phospho-alpha-D-ribose 1-diphosphate: step 4/9. This is 1-(5-phosphoribosyl)-5-[(5-phosphoribosylamino)methylideneamino] imidazole-4-carboxamide isomerase from Dictyoglomus thermophilum (strain ATCC 35947 / DSM 3960 / H-6-12).